The following is a 275-amino-acid chain: NH(3)-dependent NAD(+) synthetase (275 aa).

An ATP-binding site is contributed by 46-53 (GISGGQDS). Asp52 lines the Mg(2+) pocket. Arg140 is a binding site for deamido-NAD(+). Thr160 contributes to the ATP binding site. Glu165 provides a ligand contact to Mg(2+). Residues Lys173 and Asp180 each coordinate deamido-NAD(+). 2 residues coordinate ATP: Lys189 and Thr211. 260–261 (HK) contributes to the deamido-NAD(+) binding site.

It belongs to the NAD synthetase family. As to quaternary structure, homodimer.

The catalysed reaction is deamido-NAD(+) + NH4(+) + ATP = AMP + diphosphate + NAD(+) + H(+). It functions in the pathway cofactor biosynthesis; NAD(+) biosynthesis; NAD(+) from deamido-NAD(+) (ammonia route): step 1/1. Catalyzes the ATP-dependent amidation of deamido-NAD to form NAD. Uses ammonia as a nitrogen source. This Cronobacter sakazakii (strain ATCC BAA-894) (Enterobacter sakazakii) protein is NH(3)-dependent NAD(+) synthetase.